A 581-amino-acid polypeptide reads, in one-letter code: Sodium/hydrogen exchanger 8 (581 aa).

11 consecutive transmembrane segments (helical) span residues 60–80 (MTIFFSLLVLAICIILVHLLI), 84–104 (LHFLPESVAVVSLGILMGAVI), 123–143 (PNMFFLLLLPPIIFESGYSLH), 156–176 (LFAVFGTAISAFVVGGGIYFL), 191–211 (FAFGSLISAVDPVATIAIFNA), 264–284 (FLKMFFGSAALGTLTGLISAL), 311–331 (GLAEGISLSGIMAILFSGIVM), 354–374 (VAFLCETCVFAFLGLSIFSFP), 379–399 (ISFVIWCIVLVLFGRAVNIFP), 417–437 (MFIMWFSGLRGAIPYALSLHL), and 451–471 (TTIVIVLFTILLLGGSTMPLI). Residue Thr510 is modified to Phosphothreonine. 2 positions are modified to phosphoserine: Ser571 and Ser573.

Belongs to the monovalent cation:proton antiporter 1 (CPA1) transporter (TC 2.A.36) family. In terms of tissue distribution, ubiquitous. Strongly expressed in skeletal muscle and kidney. Detected throughout the entire gastrointestinal tract, with high expression detected in stomach, duodenum and ascending colon.

It is found in the golgi apparatus membrane. The protein resides in the golgi apparatus. It localises to the trans-Golgi network membrane. Its subcellular location is the endosome. The protein localises to the multivesicular body membrane. It is found in the apical cell membrane. The protein resides in the cytoplasmic vesicle. It localises to the secretory vesicle. Its subcellular location is the acrosome. The enzyme catalyses Na(+)(in) + H(+)(out) = Na(+)(out) + H(+)(in). With respect to regulation, HOE642 inhibits SLC9A8 activity. In terms of biological role, na(+)/H(+) antiporter. Mediates the electoneutral exchange of intracellular H(+) ions for extracellular Na(+) in 1:1 stoichiometry. Acts as an Na(+)/H(+) exchanger in the trans-Golgi. Contributes to the regulation of pH regulation of Golgi apparatus, and consequently, in protein trafficking and endosomal morphology. In germ cells, plays a crucial role in acrosome biogenesis and sperm development, probably by playing a role in the fusion of the Golgi-derived vesicles that form the acrosomal cap. Can also be active at the cell surface of specialized cells. In the small intestine, at the cell membrane, plays a major physiological role in transepithelial absorption of Na(+) and regulates intracellular pH homeostasis of intestinal epithelial cells. Acts as an important regulator of mucosal integrity in the intestine and in the stomach, could mediate the pH fluctuation necessary for mucin exocytosis or assist membrane trafficking of other proteins. Plays a role in photoreceptor survival and in the maintenance of intracellular pH homeostasis in retinal pigment epithelium (RPE cells). The sequence is that of Sodium/hydrogen exchanger 8 from Homo sapiens (Human).